The following is a 557-amino-acid chain: Calcium-dependent protein kinase 4 (557 aa).

The interval 1 to 72 (MGNTCRGSIG…LVSPRKASMN (72 aa)) is disordered. Glycine 2 is lipidated: N-myristoyl glycine. Residues 15 to 27 (QGYTQPEDSSCST) are compositionally biased toward polar residues. Residues 28–48 (NHNPSSGNSYSSSDNFSPTSN) are compositionally biased toward low complexity. The Protein kinase domain occupies 94–352 (YTLGRKLGQG…AHEVLCHPWI (259 aa)). ATP is bound by residues 100–108 (LGQGQFGTT) and lysine 123. Catalysis depends on aspartate 218, which acts as the Proton acceptor. The segment at 358–388 (APDRALDPAVLSRLKQFSAMNKLKKMALRVI) is autoinhibitory domain. EF-hand domains are found at residues 395–430 (EEIAGLREMFKAMDTDSSGAITFDELKAGLRKYGST), 431–466 (LKDTEIRELMDAADVDNSGTIDYGEFIAATVHLNKL), 467–502 (EREEHLMAAFQYFDKDGSGYITVDEVQQACIEHNMT), and 506–536 (FEDIIREVDQDNDGRIDYGEFVAMMQKGNPC). Ca(2+) contacts are provided by aspartate 408, aspartate 410, serine 412, glutamate 419, aspartate 444, aspartate 446, serine 448, threonine 450, glutamate 455, aspartate 480, aspartate 482, serine 484, tyrosine 486, glutamate 491, aspartate 514, aspartate 516, aspartate 518, arginine 520, and glutamate 525.

Belongs to the protein kinase superfamily. Ser/Thr protein kinase family. CDPK subfamily.

The protein resides in the membrane. The catalysed reaction is L-seryl-[protein] + ATP = O-phospho-L-seryl-[protein] + ADP + H(+). It catalyses the reaction L-threonyl-[protein] + ATP = O-phospho-L-threonyl-[protein] + ADP + H(+). Activated by calcium. Autophosphorylation may play an important role in the regulation of the kinase activity. Functionally, regulates the production of reactive oxygen species (ROS) by NADPH oxidase. This chain is Calcium-dependent protein kinase 4 (CPK4), found in Solanum tuberosum (Potato).